Here is a 206-residue protein sequence, read N- to C-terminus: Urease accessory protein UreG (206 aa).

Residue 13 to 20 (GPVGSGKT) participates in GTP binding.

This sequence belongs to the SIMIBI class G3E GTPase family. UreG subfamily. Homodimer. UreD, UreF and UreG form a complex that acts as a GTP-hydrolysis-dependent molecular chaperone, activating the urease apoprotein by helping to assemble the nickel containing metallocenter of UreC. The UreE protein probably delivers the nickel.

The protein localises to the cytoplasm. Functionally, facilitates the functional incorporation of the urease nickel metallocenter. This process requires GTP hydrolysis, probably effectuated by UreG. This chain is Urease accessory protein UreG, found in Natronomonas pharaonis (strain ATCC 35678 / DSM 2160 / CIP 103997 / JCM 8858 / NBRC 14720 / NCIMB 2260 / Gabara) (Halobacterium pharaonis).